Reading from the N-terminus, the 36-residue chain is uncharacterized protein (36 aa).

This is an uncharacterized protein from Spiroplasma melliferum (SpV1).